A 729-amino-acid chain; its full sequence is Fatty acid oxidation complex subunit alpha (729 aa).

An enoyl-CoA hydratase/isomerase region spans residues 1-189; sequence MLYKGDTLYL…KVGLVDAVVK (189 aa). Position 296 (Asp-296) interacts with substrate. Residues 311 to 729 are 3-hydroxyacyl-CoA dehydrogenase; the sequence is ETPKQAAVLG…AQPVGELQTA (419 aa). Residues Met-324, Asp-343, 400 to 402, Lys-407, and Ser-429 contribute to the NAD(+) site; that span reads VVE. Residue His-450 is the For 3-hydroxyacyl-CoA dehydrogenase activity of the active site. Asn-453 is a binding site for NAD(+). Substrate-binding residues include Asn-500 and Tyr-660. The tract at residues 708-729 is disordered; it reads SHNAPYYPQVEPAQPVGELQTA.

It in the N-terminal section; belongs to the enoyl-CoA hydratase/isomerase family. The protein in the C-terminal section; belongs to the 3-hydroxyacyl-CoA dehydrogenase family. As to quaternary structure, heterotetramer of two alpha chains (FadB) and two beta chains (FadA).

The enzyme catalyses a (3S)-3-hydroxyacyl-CoA + NAD(+) = a 3-oxoacyl-CoA + NADH + H(+). It catalyses the reaction a (3S)-3-hydroxyacyl-CoA = a (2E)-enoyl-CoA + H2O. It carries out the reaction a 4-saturated-(3S)-3-hydroxyacyl-CoA = a (3E)-enoyl-CoA + H2O. The catalysed reaction is (3S)-3-hydroxybutanoyl-CoA = (3R)-3-hydroxybutanoyl-CoA. The enzyme catalyses a (3Z)-enoyl-CoA = a 4-saturated (2E)-enoyl-CoA. It catalyses the reaction a (3E)-enoyl-CoA = a 4-saturated (2E)-enoyl-CoA. It functions in the pathway lipid metabolism; fatty acid beta-oxidation. In terms of biological role, involved in the aerobic and anaerobic degradation of long-chain fatty acids via beta-oxidation cycle. Catalyzes the formation of 3-oxoacyl-CoA from enoyl-CoA via L-3-hydroxyacyl-CoA. It can also use D-3-hydroxyacyl-CoA and cis-3-enoyl-CoA as substrate. This chain is Fatty acid oxidation complex subunit alpha, found in Cronobacter sakazakii (strain ATCC BAA-894) (Enterobacter sakazakii).